The sequence spans 93 residues: Microcin N immunity protein (93 aa).

3 helical membrane passes run 3–23 (FLNFAFSPVFFSIMACYFIVW), 36–56 (LSIIIISFLICFIYPWLNYKI), and 68–88 (LFCFLSSLVAVVINLIVYFIL).

It belongs to the MceB microcin immunity protein family.

It localises to the cell inner membrane. Probably able to protect the producing cell against microcin N (microcin 24). The polypeptide is Microcin N immunity protein (Escherichia coli).